A 340-amino-acid chain; its full sequence is Protein S-acyltransferase 10 (340 aa).

The next 2 membrane-spanning stretches (helical) occupy residues L34–F54 and P66–T86. Residues L162 to C212 form the DHHC domain. C192 (S-palmitoyl cysteine intermediate) is an active-site residue. The next 2 membrane-spanning stretches (helical) occupy residues F207–D227 and I241–I261.

The protein belongs to the DHHC palmitoyltransferase family. As to expression, expressed in mature embryos, embryo sacs, cotyledons, whole seedlings, hydathodes, guard cells, sites of lateral root initiation, root tips and phloem, but not in xylem.

The protein resides in the vacuole membrane. The catalysed reaction is L-cysteinyl-[protein] + hexadecanoyl-CoA = S-hexadecanoyl-L-cysteinyl-[protein] + CoA. In terms of biological role, S-acyltransferase involved in protein lipid modification. Catalyzes the palmitoylation of proteins peripheral or integral to the tonoplast. Required for the tonoplast localization of CBL2, CBL3 and CBL6, but not for the plasma membrane localization of CBL9, for the endosome localization of RABF1 or for the endomembrane localization of RABF2B. The polypeptide is Protein S-acyltransferase 10 (PAT10) (Arabidopsis thaliana (Mouse-ear cress)).